The sequence spans 360 residues: Protein Wnt-2 (360 aa).

An N-terminal signal peptide occupies residues 1-25 (MNAPLGGIWLWLPLLLTWLSPEVSS). Intrachain disulfides connect Cys76/Cys87, Cys127/Cys135, Cys137/Cys157, Cys206/Cys220, Cys208/Cys215, Cys278/Cys309, Cys294/Cys304, Cys308/Cys348, Cys324/Cys339, Cys326/Cys336, and Cys331/Cys332. Ser212 is lipidated: O-palmitoleoyl serine; by PORCN. The N-linked (GlcNAc...) asparagine glycan is linked to Asn295.

It belongs to the Wnt family. Post-translationally, palmitoleoylation is required for efficient binding to frizzled receptors. Depalmitoleoylation leads to Wnt signaling pathway inhibition.

It localises to the secreted. The protein resides in the extracellular space. It is found in the extracellular matrix. In terms of biological role, ligand for members of the frizzled family of seven transmembrane receptors. Probable developmental protein. May be a signaling molecule which affects the development of discrete regions of tissues. Is likely to signal over only few cell diameters. The chain is Protein Wnt-2 (WNT2) from Carollia perspicillata (Seba's short-tailed bat).